The following is a 245-amino-acid chain: MNSFNIDVITLLPKAFELIKNLGVITRALDKNLINVNLHDLREYGEGSYRQVDDKPYGGGAGMVLKPGPIFKAHESINKFPKSKTLLMTPQGKVLKQKDFVRWSTLDQIIIICGQYEGFDERVRCLADEEISIGDYVLSGGEIPALSIINGLTRLLPGTLGDPDSLVNESHNSPLLEHPQYTRPQIFRDMKVPDVLINGNHKEIELWREERMLKRTIKRRKDLIKNEFCDLPIDEYDGDDWLWDL.

Residues glycine 114 and 133 to 138 contribute to the S-adenosyl-L-methionine site; that span reads IGDYVL.

Belongs to the RNA methyltransferase TrmD family. As to quaternary structure, homodimer.

Its subcellular location is the cytoplasm. It catalyses the reaction guanosine(37) in tRNA + S-adenosyl-L-methionine = N(1)-methylguanosine(37) in tRNA + S-adenosyl-L-homocysteine + H(+). Its function is as follows. Specifically methylates guanosine-37 in various tRNAs. The protein is tRNA (guanine-N(1)-)-methyltransferase of Prochlorococcus marinus (strain MIT 9312).